The following is a 124-amino-acid chain: Histone H2A, embryonic (124 aa).

Residues 1 to 18 (MSGRGKSGKARTKAKTRS) show a composition bias toward basic residues. The tract at residues 1–21 (MSGRGKSGKARTKAKTRSSRA) is disordered. Residue Ser-2 is modified to N-acetylserine. At Ser-2 the chain carries Phosphoserine. The residue at position 104 (Gln-104) is an N5-methylglutamine. Lys-119 participates in a covalent cross-link: Glycyl lysine isopeptide (Lys-Gly) (interchain with G-Cter in ubiquitin).

Belongs to the histone H2A family. The nucleosome is a histone octamer containing two molecules each of H2A, H2B, H3 and H4 assembled in one H3-H4 heterotetramer and two H2A-H2B heterodimers. The octamer wraps approximately 147 bp of DNA. Monoubiquitination of Lys-119 gives a specific tag for epigenetic transcriptional repression. In terms of processing, phosphorylation of Ser-2 directly represses transcription.

It is found in the nucleus. The protein localises to the chromosome. In terms of biological role, core component of nucleosome. Nucleosomes wrap and compact DNA into chromatin, limiting DNA accessibility to the cellular machineries which require DNA as a template. Histones thereby play a central role in transcription regulation, DNA repair, DNA replication and chromosomal stability. DNA accessibility is regulated via a complex set of post-translational modifications of histones, also called histone code, and nucleosome remodeling. The protein is Histone H2A, embryonic of Psammechinus miliaris (Green sea urchin).